The following is a 253-amino-acid chain: MEKLLIVNADDFGLCKGQNYGIIDAFRNGVVSSTTAMMNSVDINHATELSAQYPALPVGMHFVLTFGRPLTAMPSLTDANGELGKWLWQRAGAGTLDLNEIAQELECQFERFSAVFGRPPTHIDSHHHVHMLPQIYPLVAAFAREKSLPLRIDRHEVQQHGLTLDNPRSSEWFNAGFYGENLSEPSFLQLLEHADQQGVNSLEIMCHPAFIDQTLMTSGYCYPRLTELAILTSPTLKPAIAQRGYRLGSFLDC.

His61 and His126 together coordinate Mg(2+).

This sequence belongs to the YdjC deacetylase family. ChbG subfamily. As to quaternary structure, homodimer. Requires Mg(2+) as cofactor.

It localises to the cytoplasm. The catalysed reaction is N,N'-diacetylchitobiose + H2O = N-acetyl-beta-D-glucosaminyl-(1-&gt;4)-D-glucosamine + acetate. It catalyses the reaction diacetylchitobiose-6'-phosphate + H2O = N'-monoacetylchitobiose-6'-phosphate + acetate. The protein operates within glycan degradation; chitin degradation. Functionally, involved in the degradation of chitin. ChbG is essential for growth on the acetylated chitooligosaccharides chitobiose and chitotriose but is dispensable for growth on cellobiose and chitosan dimer, the deacetylated form of chitobiose. Deacetylation of chitobiose-6-P and chitotriose-6-P is necessary for both the activation of the chb promoter by the regulatory protein ChbR and the hydrolysis of phosphorylated beta-glucosides by the phospho-beta-glucosidase ChbF. Catalyzes the removal of only one acetyl group from chitobiose-6-P to yield monoacetylchitobiose-6-P, the inducer of ChbR and the substrate of ChbF. This chain is Chitooligosaccharide deacetylase, found in Yersinia pestis bv. Antiqua (strain Angola).